The sequence spans 696 residues: Elongation factor G (696 aa).

A tr-type G domain is found at 8-288 (EDYRNFGIMA…AVVDFLPSPI (281 aa)). GTP-binding positions include 17–24 (AHIDAGKT), 86–90 (DTPGH), and 140–143 (NKMD).

It belongs to the TRAFAC class translation factor GTPase superfamily. Classic translation factor GTPase family. EF-G/EF-2 subfamily.

It localises to the cytoplasm. Its function is as follows. Catalyzes the GTP-dependent ribosomal translocation step during translation elongation. During this step, the ribosome changes from the pre-translocational (PRE) to the post-translocational (POST) state as the newly formed A-site-bound peptidyl-tRNA and P-site-bound deacylated tRNA move to the P and E sites, respectively. Catalyzes the coordinated movement of the two tRNA molecules, the mRNA and conformational changes in the ribosome. In Chelativorans sp. (strain BNC1), this protein is Elongation factor G.